Consider the following 547-residue polypeptide: CTP synthase (547 aa).

Residues 1–265 are amidoligase domain; the sequence is MARYVFITGG…DQAVLDAFGI (265 aa). Position 13 (S13) interacts with CTP. UTP is bound at residue S13. ATP-binding positions include 14–19 and D71; that span reads SLGKGL. Positions 71 and 139 each coordinate Mg(2+). CTP-binding positions include 146–148, 186–191, and K222; these read DIE and KTKPTQ. UTP is bound by residues 186-191 and K222; that span reads KTKPTQ. In terms of domain architecture, Glutamine amidotransferase type-1 spans 291 to 546; sequence RVAIVGKYTQ…VRAAVEVSRL (256 aa). G353 contributes to the L-glutamine binding site. Residue C380 is the Nucleophile; for glutamine hydrolysis of the active site. L-glutamine contacts are provided by residues 381–384, E404, and R474; that span reads LGMQ. Active-site residues include H519 and E521.

It belongs to the CTP synthase family. Homotetramer.

The catalysed reaction is UTP + L-glutamine + ATP + H2O = CTP + L-glutamate + ADP + phosphate + 2 H(+). The enzyme catalyses L-glutamine + H2O = L-glutamate + NH4(+). It catalyses the reaction UTP + NH4(+) + ATP = CTP + ADP + phosphate + 2 H(+). Its pathway is pyrimidine metabolism; CTP biosynthesis via de novo pathway; CTP from UDP: step 2/2. With respect to regulation, allosterically activated by GTP, when glutamine is the substrate; GTP has no effect on the reaction when ammonia is the substrate. The allosteric effector GTP functions by stabilizing the protein conformation that binds the tetrahedral intermediate(s) formed during glutamine hydrolysis. Inhibited by the product CTP, via allosteric rather than competitive inhibition. In terms of biological role, catalyzes the ATP-dependent amination of UTP to CTP with either L-glutamine or ammonia as the source of nitrogen. Regulates intracellular CTP levels through interactions with the four ribonucleotide triphosphates. This Cereibacter sphaeroides (strain ATCC 17023 / DSM 158 / JCM 6121 / CCUG 31486 / LMG 2827 / NBRC 12203 / NCIMB 8253 / ATH 2.4.1.) (Rhodobacter sphaeroides) protein is CTP synthase.